The chain runs to 1586 residues: COP1-interactive protein 1 (1586 aa).

The NAB domain occupies 10 to 84 (LKSFFEPHFD…RQYDDLTGEI (75 aa)). Positions 88–119 (VNGKGESSSSSSSDSDSDHSSKRKVKRNGNGK) are disordered. 4 coiled-coil regions span residues 128-411 (TGAL…LKES), 437-1196 (ASEL…LKEE), 1225-1336 (LETL…TEAT), and 1372-1406 (MESL…SNQK). LRR repeat units lie at residues 173–187 (SEEI…TEKL), 188–210 (EDEK…VAGK), 216–239 (NQKL…GIKR), 261–285 (TSNL…MNSA), and 287–309 (EENK…GQTT). Positions 249 to 262 (DWKTTSDQLKDETS) are enriched in basic and acidic residues. The disordered stretch occupies residues 249-286 (DWKTTSDQLKDETSNLKQQLEASEQRVSELTSGMNSAE). The segment at 325–353 (KEKESEHSSLVELHKTHERESSSQVKELE) is disordered. 20 LRR repeats span residues 384–410 (IAEL…QLKE), 437–461 (ASEL…LKAA), 473–498 (VETM…KLKD), 560–586 (IAEL…QLKE), 613–637 (VSEL…LKDA), 649–674 (LEIM…ELKD), 768–792 (LSEL…LNAA), 824–850 (LAES…AHKR), 856–880 (VKEL…LNSS), 902–929 (ESTI…LFSL), 944–968 (LRGL…LKAA), 990–1014 (QIMV…ESKL), 1077–1101 (ISEL…LEDN), 1120–1144 (RAEL…SEEA), 1195–1220 (EEII…KIKG), 1247–1272 (VQMH…NLKN), 1372–1396 (MESL…ISNI), 1398–1417 (VKLR…LTEK), 1426–1448 (AKHL…TYRG), and 1450–1474 (IKEI…LTEK). Positions 430–456 (QRDSSTRASELEAQLESSKQQVSDLSA) are disordered. The span at 444–455 (LESSKQQVSDLS) shows a compositional bias: polar residues. Positions 965 to 985 (LKAAEEESRTMSTKISETSDE) are disordered. Residues 1496–1530 (VIERNHEKEKMNKEIEKKDEEIKKLGGKVREDEKE) adopt a coiled-coil conformation.

Interacts with COP1 coiled-coil region. As to expression, mainly expressed in photosynthetic and vascular tissues. Accumulates in both dark-grown and light-grown seedlings roots and shoots, leaves and flowers (at protein level).

The protein resides in the cell membrane. Its subcellular location is the cytoplasm. It localises to the cytoskeleton. In terms of biological role, positive regulator of abscisic acid (ABA)-mediated signaling pathways involved in abiotic stress responses (e.g. osmotic stress) and leading to various plant adaptation (e.g. stomata closure). The polypeptide is COP1-interactive protein 1 (Arabidopsis thaliana (Mouse-ear cress)).